We begin with the raw amino-acid sequence, 3640 residues long: Serine/threonine-protein kinase SMG1 (3640 aa).

The segment covering 21–34 (NDWQPRSDSLSASQ) has biased composition (polar residues). The disordered stretch occupies residues 21 to 41 (NDWQPRSDSLSASQDGVKCSV). One can recognise an FAT domain in the interval 1495 to 1843 (YCHSGKCELA…LYPAIVGSIS (349 aa)). An HEAT repeat occupies 1794 to 1829 (APWRGIIPQLFSRLNHPEAYIRQSICSLLCRVAQDS). Residues 1870–1890 (GLCGGESETGSGPTSQESSRG) form a disordered region. Low complexity predominate over residues 1874-1887 (GESETGSGPTSQES). The 340-residue stretch at 2102 to 2441 (VGNTITILPT…MERDITRSLF (340 aa)) folds into the PI3K/PI4K catalytic domain. Residues 2108–2114 (ILPTKTK) are G-loop. The tract at residues 2310-2318 (GLGDRHLDN) is catalytic loop. The activation loop stretch occupies residues 2330–2354 (HIDYNVCFEKGKSLRVPEKVPFRMT). In terms of domain architecture, FATC spans 3608–3640 (RRMSVTEQVDYVIKEATNVDNLAQLYEGWTAWV).

Belongs to the PI3/PI4-kinase family. It depends on Mn(2+) as a cofactor. Post-translationally, autophosphorylated.

The protein localises to the nucleus. The protein resides in the cytoplasm. The enzyme catalyses L-seryl-[protein] + ATP = O-phospho-L-seryl-[protein] + ADP + H(+). The catalysed reaction is L-threonyl-[protein] + ATP = O-phospho-L-threonyl-[protein] + ADP + H(+). Functionally, serine/threonine protein kinase involved in both mRNA surveillance and genotoxic stress response pathways. Recognizes the substrate consensus sequence [ST]-Q. Plays a central role in nonsense-mediated decay (NMD) of mRNAs containing premature stop codons by phosphorylating UPF1/RENT1. This is Serine/threonine-protein kinase SMG1 from Danio rerio (Zebrafish).